The chain runs to 275 residues: Shikimate dehydrogenase (NADP(+)) (275 aa).

Residues S16 to S18 and T63 each bind shikimate. K67 (proton acceptor) is an active-site residue. 2 residues coordinate shikimate: N88 and D104. Residues G129 to A133, N153 to R158, and M219 contribute to the NADP(+) site. Y221 contacts shikimate. Residue G243 participates in NADP(+) binding.

Belongs to the shikimate dehydrogenase family. In terms of assembly, homodimer.

It catalyses the reaction shikimate + NADP(+) = 3-dehydroshikimate + NADPH + H(+). It participates in metabolic intermediate biosynthesis; chorismate biosynthesis; chorismate from D-erythrose 4-phosphate and phosphoenolpyruvate: step 4/7. Functionally, involved in the biosynthesis of the chorismate, which leads to the biosynthesis of aromatic amino acids. Catalyzes the reversible NADPH linked reduction of 3-dehydroshikimate (DHSA) to yield shikimate (SA). In Marinobacter nauticus (strain ATCC 700491 / DSM 11845 / VT8) (Marinobacter aquaeolei), this protein is Shikimate dehydrogenase (NADP(+)).